A 548-amino-acid chain; its full sequence is uncharacterized protein (548 aa).

S19 and S25 each carry phosphoserine. A Phosphothreonine modification is found at T47.

This is an uncharacterized protein from Schizosaccharomyces pombe (strain 972 / ATCC 24843) (Fission yeast).